Reading from the N-terminus, the 196-residue chain is UPF0301 protein BT_1078 (196 aa).

Belongs to the UPF0301 (AlgH) family.

The polypeptide is UPF0301 protein BT_1078 (Bacteroides thetaiotaomicron (strain ATCC 29148 / DSM 2079 / JCM 5827 / CCUG 10774 / NCTC 10582 / VPI-5482 / E50)).